The sequence spans 192 residues: Small ribosomal subunit protein eS7 (192 aa).

The protein belongs to the eukaryotic ribosomal protein eS7 family.

The sequence is that of Small ribosomal subunit protein eS7 (RpS7) from Culex quinquefasciatus (Southern house mosquito).